The primary structure comprises 83 residues: Mitochondrial import inner membrane translocase subunit Tim8 (83 aa).

Residues 35–60 (CWDVCFADYRPPSKMDGKTQTCIQNC) carry the Twin CX3C motif motif. Cystine bridges form between Cys-35/Cys-60 and Cys-39/Cys-56.

The protein belongs to the small Tim family. In terms of assembly, heterohexamer; composed of 3 copies of ddp-1/tim-8 and 3 copies of tin-13/tim-13, named soluble 70 kDa complex. Associates with the TIM22 complex, whose core is composed of tim-22.

It localises to the mitochondrion inner membrane. Mitochondrial intermembrane chaperone that participates in the import and insertion of some multi-pass transmembrane proteins into the mitochondrial inner membrane. Also required for the transfer of beta-barrel precursors from the TOM complex to the sorting and assembly machinery (SAM complex) of the outer membrane. Acts as a chaperone-like protein that protects the hydrophobic precursors from aggregation and guide them through the mitochondrial intermembrane space. The ddp-1/tim-8-tim-13 complex mediates the import of some proteins while the predominant tim-9/tin-9.1-tim-10/tin-10 70 kDa complex mediates the import of much more proteins. The sequence is that of Mitochondrial import inner membrane translocase subunit Tim8 from Caenorhabditis elegans.